Here is a 157-residue protein sequence, read N- to C-terminus: Ribosome maturation factor RimP (157 aa).

This sequence belongs to the RimP family.

Its subcellular location is the cytoplasm. Its function is as follows. Required for maturation of 30S ribosomal subunits. The polypeptide is Ribosome maturation factor RimP (Limosilactobacillus reuteri (strain DSM 20016) (Lactobacillus reuteri)).